Consider the following 263-residue polypeptide: Chymotrypsinogen B (263 aa).

An N-terminal signal peptide occupies residues 1–18 (MASLWLLSCFSLVGAAFG). 5 cysteine pairs are disulfide-bonded: Cys19–Cys140, Cys60–Cys76, Cys154–Cys219, Cys186–Cys200, and Cys209–Cys238. Residues 34–261 (IVNGEDAVPG…LIPWVQKILA (228 aa)) enclose the Peptidase S1 domain. His75 acts as the Charge relay system in catalysis. Phosphoserine is present on Ser93. Asp120 (charge relay system) is an active-site residue. Residue Ser213 is the Charge relay system of the active site.

Belongs to the peptidase S1 family.

It is found in the secreted. It localises to the extracellular space. The catalysed reaction is Preferential cleavage: Tyr-|-Xaa, Trp-|-Xaa, Phe-|-Xaa, Leu-|-Xaa.. This is Chymotrypsinogen B from Homo sapiens (Human).